A 224-amino-acid polypeptide reads, in one-letter code: CDP-diacylglycerol--inositol 3-phosphatidyltransferase (224 aa).

Residues 1–8 (MTIAEHDN) lie on the Cytoplasmic side of the membrane. A helical membrane pass occupies residues 9-29 (VFIFVPNLIGYARIVLALIAF). At 30–35 (WFMSTN) the chain is on the lumenal side. Residues 36 to 52 (YVISGWCYVTSALLDAV) form a helical membrane-spanning segment. Mg(2+) is bound by residues Asp-50 and Asp-53. Residues 53 to 76 (DGQAARAFNQSTRFGAMLDQLTDR) lie on the Cytoplasmic side of the membrane. Gly-54, Arg-58, and Thr-64 together coordinate a CDP-1,2-diacyl-sn-glycerol. Residues Asp-71 and Asp-75 each coordinate Mg(2+). Asp-75 (proton acceptor) is an active-site residue. The chain crosses the membrane as a helical span at residues 77–97 (CGTTGLLVTLAYFYPRYMFWF). Position 98 (Gln-98) is a topological domain, lumenal. Residues 99-119 (LSIAIDVACHWLFMQTSVVVG) traverse the membrane as a helical segment. Over 120–138 (RSSHKVNDNFIMRLYYQKD) the chain is Cytoplasmic. The helical transmembrane segment at 139–159 (ILTFMCCVNELFYVCLYLLHF) threads the bilayer. Residues 160-163 (TYGP) lie on the Lumenal side of the membrane. Residues 164–184 (LIFGASLFKILAFLTGPFAVL) traverse the membrane as a helical segment. Residues 185-224 (KALISVMHAYVAGIDLAAVDVRERQERRQKSEPVSGKKVE) are Cytoplasmic-facing.

This sequence belongs to the CDP-alcohol phosphatidyltransferase class-I family. Requires Mn(2+) as cofactor. Mg(2+) serves as cofactor. In adults, expression is higher in the head than in the body (at protein level).

It is found in the apical cell membrane. It localises to the lateral cell membrane. It catalyses the reaction a CDP-1,2-diacyl-sn-glycerol + myo-inositol = a 1,2-diacyl-sn-glycero-3-phospho-(1D-myo-inositol) + CMP + H(+). In terms of biological role, catalyzes the biosynthesis of phosphatidylinositol (PtdIns) as well as PtdIns:inositol exchange reaction. May thus act to reduce an excessive cellular PtdIns content. The exchange activity is due to the reverse reaction of PtdIns synthase and is dependent on CMP, which is tightly bound to the enzyme. Required for the regeneration of the signaling molecule phosphatidylinositol 4,5-bisphosphate (PtdInsP2) from phosphatidic acid (PA) and maintenance of its steady supply during signaling, thus playing an essential role during phospholipase C-mediated transduction. This function is essential in photoreceptors for light-activated recycling of PtdInsP2 during phototransduction. As a key enzyme of the phosphoinositide pathway, indirectly involved in the polarized secretion of basal membrane (BM) proteins in follicle epithelial (FE) cells through promoting PtdInsP2 synthesis in the apical and lateral plasma membranes of FE cells. PtdInsP2 controls the localization of Crag and perhaps the localization and expression of strat, both of which are essential for restricting the secretion of BM proteins to the basal surface. The sequence is that of CDP-diacylglycerol--inositol 3-phosphatidyltransferase from Drosophila melanogaster (Fruit fly).